Here is a 270-residue protein sequence, read N- to C-terminus: Phosphatidylglycerol--prolipoprotein diacylglyceryl transferase (270 aa).

4 helical membrane passes run 19-39 (FPVY…LWLA), 56-76 (LVLI…VIFE), 92-112 (QGGL…ILFA), and 116-136 (GVSF…GQAI). Residue arginine 138 coordinates a 1,2-diacyl-sn-glycero-3-phospho-(1'-sn-glycerol). Transmembrane regions (helical) follow at residues 178–198 (HPTF…LLAL), 206–226 (GELF…VEGL), and 236–256 (LRIA…FIIV).

Belongs to the Lgt family.

It localises to the cell membrane. The catalysed reaction is L-cysteinyl-[prolipoprotein] + a 1,2-diacyl-sn-glycero-3-phospho-(1'-sn-glycerol) = an S-1,2-diacyl-sn-glyceryl-L-cysteinyl-[prolipoprotein] + sn-glycerol 1-phosphate + H(+). It participates in protein modification; lipoprotein biosynthesis (diacylglyceryl transfer). Its function is as follows. Catalyzes the transfer of the diacylglyceryl group from phosphatidylglycerol to the sulfhydryl group of the N-terminal cysteine of a prolipoprotein, the first step in the formation of mature lipoproteins. This Bacillus thuringiensis subsp. konkukian (strain 97-27) protein is Phosphatidylglycerol--prolipoprotein diacylglyceryl transferase.